A 275-amino-acid polypeptide reads, in one-letter code: Small ribosomal subunit protein uS3 (275 aa).

The KH type-2 domain maps to I38 to K106. Over residues N216 to G228 the composition is skewed to low complexity. The disordered stretch occupies residues N216–A275. The span at G229 to G244 shows a compositional bias: basic and acidic residues. The segment covering P249–A268 has biased composition (low complexity).

It belongs to the universal ribosomal protein uS3 family. In terms of assembly, part of the 30S ribosomal subunit. Forms a tight complex with proteins S10 and S14.

Functionally, binds the lower part of the 30S subunit head. Binds mRNA in the 70S ribosome, positioning it for translation. The chain is Small ribosomal subunit protein uS3 from Streptomyces avermitilis (strain ATCC 31267 / DSM 46492 / JCM 5070 / NBRC 14893 / NCIMB 12804 / NRRL 8165 / MA-4680).